Here is a 757-residue protein sequence, read N- to C-terminus: Glutathione biosynthesis bifunctional protein GshAB (757 aa).

Residues 1 to 337 (MKIQHIIHEN…LGKARLAEVA (337 aa)) form a glutamate--cysteine ligase region. The ATP-grasp domain occupies 494-753 (KKVLQKAGFN…LTQNVIKMLF (260 aa)). 521–580 (ALFENRAVVIKPKSTNYGLGITIFQQGVQNREDFAKALEIAFREDKEVMVEDYLVGTEYR) is a binding site for ATP. Mg(2+) is bound by residues Asp-702, Glu-723, and Asn-725. Mn(2+) contacts are provided by Asp-702, Glu-723, and Asn-725.

It in the N-terminal section; belongs to the glutamate--cysteine ligase type 1 family. Type 2 subfamily. Monomer. It depends on Mg(2+) as a cofactor. Mn(2+) is required as a cofactor.

The catalysed reaction is L-cysteine + L-glutamate + ATP = gamma-L-glutamyl-L-cysteine + ADP + phosphate + H(+). It catalyses the reaction gamma-L-glutamyl-L-cysteine + glycine + ATP = glutathione + ADP + phosphate + H(+). It participates in sulfur metabolism; glutathione biosynthesis; glutathione from L-cysteine and L-glutamate: step 1/2. The protein operates within sulfur metabolism; glutathione biosynthesis; glutathione from L-cysteine and L-glutamate: step 2/2. Its function is as follows. Synthesizes glutathione from L-glutamate and L-cysteine via gamma-L-glutamyl-L-cysteine. This chain is Glutathione biosynthesis bifunctional protein GshAB, found in Pasteurella multocida (strain Pm70).